The chain runs to 78 residues: uncharacterized protein (78 aa).

Transmembrane regions (helical) follow at residues 7–27 and 41–61; these read ICLV…FFQF and LSRI…GLLF.

It localises to the cell membrane. This is an uncharacterized protein from Bacillus subtilis (strain 168).